The sequence spans 118 residues: Large ribosomal subunit protein bL20 (118 aa).

This sequence belongs to the bacterial ribosomal protein bL20 family.

Binds directly to 23S ribosomal RNA and is necessary for the in vitro assembly process of the 50S ribosomal subunit. It is not involved in the protein synthesizing functions of that subunit. This Pectobacterium atrosepticum (strain SCRI 1043 / ATCC BAA-672) (Erwinia carotovora subsp. atroseptica) protein is Large ribosomal subunit protein bL20.